The following is a 375-amino-acid chain: Mitochondrial phosphate carrier protein 3, mitochondrial (375 aa).

The chain crosses the membrane as a helical span at residues 76-96; it reads AFYAACTFGGILSCGLTHMTV. Solcar repeat units lie at residues 76–160, 173–257, and 274–353; these read AFYA…FKKT, YKTL…IVEM, and LQLG…FKVF. Residues 97–134 lie on the Mitochondrial matrix side of the membrane; that stretch reads TPLDLVKCNMQIDPAKYKSISSGFGILLKEQGVKGFFR. A helical membrane pass occupies residues 135–154; it reads GWVPTLLGYSAQGACKFGFY. Topologically, residues 155 to 175 are mitochondrial intermembrane; sequence EYFKKTYSDLAGPEYTAKYKT. A helical membrane pass occupies residues 176–196; the sequence is LIYLAGSASAEIIADIALCPF. Residues 197–231 are Mitochondrial matrix-facing; the sequence is EAVKVRVQTQPGFARGMSDGFPKFIKSEGYGGLYK. The chain crosses the membrane as a helical span at residues 232–251; that stretch reads GLAPLWGRQIPYTMMKFASF. The Mitochondrial intermembrane portion of the chain corresponds to 252-272; that stretch reads ETIVEMIYKYAIPNPKSECSK. A helical transmembrane segment spans residues 273–293; that stretch reads GLQLGVSFAGGYVAGVFCAIV. Residues 294–332 lie on the Mitochondrial matrix side of the membrane; the sequence is SHPADNLVSFLNNAKGATVGDAVKKIGMVGLFTRGLPLR. A helical transmembrane segment spans residues 333-353; the sequence is IVMIGTLTGAQWGLYDAFKVF. At 354 to 375 the chain is on the mitochondrial intermembrane side; it reads VGLPTTGGVAPAPAIAATEAKA.

Belongs to the mitochondrial carrier (TC 2.A.29) family. As to expression, expressed in stems, leaves and flowers. Strong expression in vascular tissues.

The protein localises to the mitochondrion inner membrane. Functionally, transport of phosphate groups from the cytosol to the mitochondrial matrix. Mediates salt stress tolerance through an ATP-dependent pathway and via modulation of the gibberellin metabolism. This Arabidopsis thaliana (Mouse-ear cress) protein is Mitochondrial phosphate carrier protein 3, mitochondrial (MPT3).